Reading from the N-terminus, the 1141-residue chain is DNA-directed RNA polymerase subunit beta (1141 aa).

The protein belongs to the RNA polymerase beta chain family. The RNAP catalytic core consists of 2 alpha, 1 beta, 1 beta' and 1 omega subunit. When a sigma factor is associated with the core the holoenzyme is formed, which can initiate transcription.

The enzyme catalyses RNA(n) + a ribonucleoside 5'-triphosphate = RNA(n+1) + diphosphate. In terms of biological role, DNA-dependent RNA polymerase catalyzes the transcription of DNA into RNA using the four ribonucleoside triphosphates as substrates. This chain is DNA-directed RNA polymerase subunit beta, found in Frankia casuarinae (strain DSM 45818 / CECT 9043 / HFP020203 / CcI3).